Reading from the N-terminus, the 470-residue chain is Aromatic amino acid aminotransferase C569.07 (470 aa).

Belongs to the class-I pyridoxal-phosphate-dependent aminotransferase family. It depends on pyridoxal 5'-phosphate as a cofactor.

It is found in the cytoplasm. It carries out the reaction an aromatic L-alpha-amino acid + 2-oxoglutarate = an aromatic oxo-acid + L-glutamate. Functionally, has aromatic amino acid transaminase activity. The protein is Aromatic amino acid aminotransferase C569.07 of Schizosaccharomyces pombe (strain 972 / ATCC 24843) (Fission yeast).